We begin with the raw amino-acid sequence, 221 residues long: 7-cyano-7-deazaguanine synthase (221 aa).

7 to 17 provides a ligand contact to ATP; the sequence is LSGGMDSSTLA. Cysteine 187, cysteine 195, cysteine 198, and cysteine 201 together coordinate Zn(2+).

It belongs to the QueC family. Requires Zn(2+) as cofactor.

The enzyme catalyses 7-carboxy-7-deazaguanine + NH4(+) + ATP = 7-cyano-7-deazaguanine + ADP + phosphate + H2O + H(+). It participates in purine metabolism; 7-cyano-7-deazaguanine biosynthesis. In terms of biological role, catalyzes the ATP-dependent conversion of 7-carboxy-7-deazaguanine (CDG) to 7-cyano-7-deazaguanine (preQ(0)). This chain is 7-cyano-7-deazaguanine synthase, found in Methanosphaerula palustris (strain ATCC BAA-1556 / DSM 19958 / E1-9c).